Reading from the N-terminus, the 147-residue chain is UPF0306 protein KPN78578_35330 (147 aa).

It belongs to the UPF0306 family.

This chain is UPF0306 protein KPN78578_35330, found in Klebsiella pneumoniae subsp. pneumoniae (strain ATCC 700721 / MGH 78578).